Reading from the N-terminus, the 234-residue chain is Orofacial cleft 1 candidate gene 1 protein homolog (234 aa).

Disordered stretches follow at residues 1–21 (MEKEKFQQKALKQTKQKKSKS) and 201–234 (SKHHKEASHHNKKNCNPGFMSSFKDREASRWQQR). The segment covering 202 to 213 (KHHKEASHHNKK) has biased composition (basic residues). Basic and acidic residues predominate over residues 223–234 (FKDREASRWQQR).

The protein is Orofacial cleft 1 candidate gene 1 protein homolog (OFCC1) of Gallus gallus (Chicken).